The primary structure comprises 323 residues: MSSKPKPIEIIGAPFSKGQPRGGVEKGPAALRKAGLVEKLKETEYNVRDHGDLAFVDVPNDSPFQIVKNPRSVGKANEQLAAVVAETQKNGTISVVLGGDHSMAIGSISGHARVHPDLCVIWVDAHTDINTPLTTSSGNLHGQPVAFLLKELKGKFPDVPGFSWVTPCISAKDIVYIGLRDVDPGEHYIIKTLGIKYFSMTEVDKLGIGKVMEETFSYLLGRKKRPIHLSFDVDGLDPVFTPATGTPVVGGLSYREGLYITEEIYKTGLLSGLDIMEVNPTLGKTPEEVTRTVNTAVALTLSCFGTKREGNHKPETDYLKPPK.

The segment at 1 to 27 (MSSKPKPIEIIGAPFSKGQPRGGVEKG) is disordered. Residue Lys17 is modified to N6-succinyllysine. Ser62 and Ser72 each carry phosphoserine. Position 75 is an N6-succinyllysine (Lys75). Mn(2+) contacts are provided by His101, Asp124, His126, and Asp128. Substrate-binding positions include 126 to 130 (HTDIN) and 137 to 139 (SGN). Position 163 is a phosphoserine (Ser163). Residue Asp183 coordinates substrate. Ser217 is modified (phosphoserine). Mn(2+) contacts are provided by Asp232 and Asp234. 2 residues coordinate substrate: Thr246 and Glu277. Thr281 carries the phosphothreonine modification.

The protein belongs to the arginase family. Homotrimer. Interacts with CMTM6. It depends on Mn(2+) as a cofactor. As to expression, detected in liver (at protein level).

It localises to the cytoplasm. It is found in the cytoplasmic granule. The catalysed reaction is L-arginine + H2O = urea + L-ornithine. Its pathway is nitrogen metabolism; urea cycle; L-ornithine and urea from L-arginine: step 1/1. With respect to regulation, inactivated by diethyl pyrocarbonate (DEPC). In terms of biological role, key element of the urea cycle converting L-arginine to urea and L-ornithine, which is further metabolized into metabolites proline and polyamides that drive collagen synthesis and bioenergetic pathways critical for cell proliferation, respectively; the urea cycle takes place primarily in the liver and, to a lesser extent, in the kidneys. Its function is as follows. Functions in L-arginine homeostasis in nonhepatic tissues characterized by the competition between nitric oxide synthase (NOS) and arginase for the available intracellular substrate arginine. Arginine metabolism is a critical regulator of innate and adaptive immune responses. Involved in an antimicrobial effector pathway in polymorphonuclear granulocytes (PMN). Upon PMN cell death is liberated from the phagolysosome and depletes arginine in the microenvironment leading to suppressed T cell and natural killer (NK) cell proliferation and cytokine secretion. In group 2 innate lymphoid cells (ILC2s) promotes acute type 2 inflammation in the lung and is involved in optimal ILC2 proliferation but not survival. Plays a role in the immune response of alternatively activated or M2 macrophages in processes such as wound healing and tissue regeneration, immune defense against multicellular pathogens and parasites, and immune suppression and allergic inflammation; the regulatory outcome seems to be organ specific. In tumor-infiltrating dendritic cells (DCs) and myeloid-derived suppressor cells (MDSCs) plays a role in suppression of T cell-mediated antitumor immunity. In Rattus norvegicus (Rat), this protein is Arginase-1 (Arg1).